The following is a 1242-amino-acid chain: MAPATPKTSKTAHFENGSTSSQKKMKQSSLLSFFSKQVPSGTPSKKVQKPTPATLENTATDKITKNPQGGKTGKLFVDVDEDNDLTIAEETVSTVRSDIMHSQEPQSDTMLNSNTTEPKSTTTDEDLSSSQSRRNHKRRVNYAESDDDDSDTTFTAKRKKGKVVDSESDEDEYLPDKNDGDEDDDIADDKEDIKGELAEDSGDDDDLISLAETTSKKKFSYNTSHSSSPFTRNISRDNSKKKSRPNQAPSRSYNPSHSQPSATSKSSKFNKQNEERYQWLVDERDAQRRPKSDPEYDPRTLYIPSSAWNKFTPFEKQYWEIKSKMWDCIVFFKKGKFFELYEKDALLANALFDLKIAGGGRANMQLAGIPEMSFEYWAAQFIQMGYKVAKVDQRESMLAKEMREGSKGIVKRELQCILTSGTLTDGDMLHSDLATFCLAIREEPGNFYNETQLDSSTIVQKLNTKIFGAAFIDTATGELQMLEFEDDSECTKLDTLMSQVRPMEVVMERNNLSTLANKIVKFNSAPNAIFNEVKAGEEFYDCDKTYAEIISSEYFSTEEDWPEVLKSYYDTGKKVGFSAFGGLLYYLKWLKLDKNLISMKNIKEYDFVKSQHSMVLDGITLQNLEIFSNSFDGSDKGTLFKLFNRAITPMGKRMMKKWLMHPLLRKNDIESRLDSVDSLLQDITLREQLEITFSKLPDLERMLARIHSRTIKVKDFEKVITAFETIIELQDSLKNNDLKGDVSKYISSFPEGLVEAVKSWTNAFERQKAINENIIVPQRGFDIEFDKSMDRIQELEDELMEILMTYRKQFKCSNIQYKDSGKEIYTIEIPISATKNVPSNWVQMAANKTYKRYYSDEVRALARSMAEAKEIHKTLEEDLKNRLCQKFDAHYNTIWMPTIQAISNIDCLLAITRTSEYLGAPSCRPTIVDEVDSKTNTQLNGFLKFKSLRHPCFNLGATTAKDFIPNDIELGKEQPRLGLLTGANAAGKSTILRMACIAVIMAQMGCYVPCESAVLTPIDRIMTRLGANDNIMQGKSTFFVELAETKKILDMATNRSLLVVDELGRGGSSSDGFAIAESVLHHVATHIQSLGFFATHYGTLASSFKHHPQVRPLKMSILVDEATRNVTFLYKMLEGQSEGSFGMHVASMCGISKEIIDNAQIAADNLEHTSRLVKERDLAANNLNGEVVSVPGGLQSDFVRIAYGDGLKNTKLGSGEGVLNYDWNIKRNVLKSLFSIIDDLQS.

Residues 1–11 are compositionally biased toward polar residues; sequence MAPATPKTSKT. Residues 1 to 271 are disordered; sequence MAPATPKTSK…ATSKSSKFNK (271 aa). A compositionally biased stretch (low complexity) spans 18 to 37; the sequence is STSSQKKMKQSSLLSFFSKQ. Residues 27–34 carry the PIP box motif; sequence QSSLLSFF. The segment covering 54 to 69 has biased composition (polar residues); sequence TLENTATDKITKNPQG. Phosphoserine is present on Ser102. Polar residues predominate over residues 103–121; the sequence is QEPQSDTMLNSNTTEPKST. Residues Ser145 and Ser150 each carry the phosphoserine modification. Composition is skewed to acidic residues over residues 166–190 and 198–207; these read SESD…ADDK and AEDSGDDDDL. Position 201 is a phosphoserine (Ser201). Polar residues-rich tracts occupy residues 220–233 and 245–270; these read SYNT…FTRN and PNQA…SKFN. Residues 228–299 mediate DNA binding; sequence SPFTRNISRD…PKSDPEYDPR (72 aa). Residues 305–421 are mispair-binding domain; that stretch reads SSAWNKFTPF…RELQCILTSG (117 aa). The residue at position 451 (Thr451) is a Phosphothreonine. Position 982–989 (982–989) interacts with ATP; that stretch reads GANAAGKS.

It belongs to the DNA mismatch repair MutS family. In terms of assembly, heterodimer consisting of MSH2-MSH6 (MutS alpha). Forms a ternary complex with MutL alpha (MLH1-PMS1). MutS alpha interacts with proliferating cell nuclear antigen (PCNA/POL30). This interaction is disrupted upon binding of MutS alpha to mismatch DNA.

It localises to the nucleus. With respect to regulation, inhibited by Cd(2+). In terms of biological role, component of the post-replicative DNA mismatch repair system (MMR). Heterodimerizes with MSH2 to form MutS alpha, which binds to DNA mismatches thereby initiating DNA repair. MSH6 provides substrate-binding and substrate specificity to the complex. When bound, MutS alpha bends the DNA helix and shields approximately 20 base pairs. Acts mainly to repair base-base and single insertion-deletion mismatches that occur during replication, but can also repair longer insertion-deletion loops (IDLs), although with decreasing efficiency as the size of the extrahelical loop increases. After mismatch binding, forms a ternary complex with the MutL alpha heterodimer, which is thought to be responsible for directing the downstream MMR events, including strand discrimination, excision, and resynthesis. ATP binding and hydrolysis by the MutS alpha complex is crucial for MMR. Both subunits bind ATP, but with differing affinities, and their ATPase kinetics are also very different. MSH6 binds and hydrolyzes ATP rapidly, whereas MSH2 catalyzes ATP at a substantially slower rate. Binding to a mismatched base pair suppresses MSH6-catalyzed ATP hydrolysis, but not the activity of MSH2. ATP binding to both subunits is necessary to trigger a change in MutS alpha interaction with mismatched DNA, converting MutS alpha into a sliding clamp capable of hydrolysis-independent movement along DNA, and also facilitates formation of ternary complexes containing MutS and MutL proteins and the mismatch. May also be involved in resolution of recombination intermediates. This is DNA mismatch repair protein MSH6 (MSH6) from Saccharomyces cerevisiae (strain ATCC 204508 / S288c) (Baker's yeast).